The chain runs to 154 residues: Transcriptional repressor NrdR (154 aa).

Residues Cys-3–Cys-34 fold into a zinc finger. The 91-residue stretch at Leu-46–Asp-136 folds into the ATP-cone domain.

It belongs to the NrdR family. It depends on Zn(2+) as a cofactor.

Negatively regulates transcription of bacterial ribonucleotide reductase nrd genes and operons by binding to NrdR-boxes. The protein is Transcriptional repressor NrdR of Mycolicibacterium vanbaalenii (strain DSM 7251 / JCM 13017 / BCRC 16820 / KCTC 9966 / NRRL B-24157 / PYR-1) (Mycobacterium vanbaalenii).